Consider the following 195-residue polypeptide: Thymidylate kinase (195 aa).

7–14 (GIDGSGKT) contributes to the ATP binding site.

It belongs to the thymidylate kinase family.

It carries out the reaction dTMP + ATP = dTDP + ADP. In terms of biological role, phosphorylation of dTMP to form dTDP in both de novo and salvage pathways of dTTP synthesis. The polypeptide is Thymidylate kinase (tmk) (Aquifex aeolicus (strain VF5)).